We begin with the raw amino-acid sequence, 129 residues long: MNLIALLEQEEIKRLTGDKPVTEFAPGDTVIVSVNVVEGTRKRVQAFEGVVIAKRNRGLNSAFIVRKISSGEAVERTFQLYSPQIASIEVKRRGDVRRAKLYYLRNRSGKSARIKEKLVSKQANHQAQG.

This sequence belongs to the bacterial ribosomal protein bL19 family.

In terms of biological role, this protein is located at the 30S-50S ribosomal subunit interface and may play a role in the structure and function of the aminoacyl-tRNA binding site. In Bordetella avium (strain 197N), this protein is Large ribosomal subunit protein bL19.